The primary structure comprises 154 residues: D-ribose pyranase 2 (154 aa).

The Proton donor role is filled by His-20. Residues Asp-28, His-98, and 121 to 123 (WGN) each bind substrate.

The protein belongs to the RbsD / FucU family. RbsD subfamily. Homodecamer.

It is found in the cytoplasm. It carries out the reaction beta-D-ribopyranose = beta-D-ribofuranose. Its pathway is carbohydrate metabolism; D-ribose degradation; D-ribose 5-phosphate from beta-D-ribopyranose: step 1/2. Catalyzes the interconversion of beta-pyran and beta-furan forms of D-ribose. The chain is D-ribose pyranase 2 from Rubrobacter xylanophilus (strain DSM 9941 / JCM 11954 / NBRC 16129 / PRD-1).